The sequence spans 111 residues: Cornifelin (111 aa).

This sequence belongs to the cornifelin family. As to quaternary structure, directly or indirectly cross-linked to CE proteins loricin and involucrin (IVL).

The protein localises to the cytoplasm. Part of the insoluble cornified cell envelope (CE) of stratified squamous epithelia. The protein is Cornifelin (CNFN) of Bos taurus (Bovine).